The primary structure comprises 255 residues: Triosephosphate isomerase (255 aa).

9–11 (NWK) contributes to the substrate binding site. His96 acts as the Electrophile in catalysis. Glu170 functions as the Proton acceptor in the catalytic mechanism. Residues Gly176, Ser216, and 237–238 (GG) contribute to the substrate site.

It belongs to the triosephosphate isomerase family. Homodimer.

It localises to the cytoplasm. The catalysed reaction is D-glyceraldehyde 3-phosphate = dihydroxyacetone phosphate. It participates in carbohydrate biosynthesis; gluconeogenesis. The protein operates within carbohydrate degradation; glycolysis; D-glyceraldehyde 3-phosphate from glycerone phosphate: step 1/1. Functionally, involved in the gluconeogenesis. Catalyzes stereospecifically the conversion of dihydroxyacetone phosphate (DHAP) to D-glyceraldehyde-3-phosphate (G3P). The protein is Triosephosphate isomerase of Magnetococcus marinus (strain ATCC BAA-1437 / JCM 17883 / MC-1).